The following is a 314-amino-acid chain: Large ribosomal subunit protein uL10 (314 aa).

The segment at 281 to 314 is disordered; it reads GSTQETPEEKKEEAKKEEKSPDESISEGLGALFQ. Positions 287 to 302 are enriched in basic and acidic residues; sequence PEEKKEEAKKEEKSPD.

The protein belongs to the universal ribosomal protein uL10 family. Part of the 50S ribosomal subunit. Forms part of the ribosomal stalk which helps the ribosome interact with GTP-bound translation factors. Forms a heptameric L10(L12)2(L12)2(L12)2 complex, where L10 forms an elongated spine to which the L12 dimers bind in a sequential fashion.

Its function is as follows. Forms part of the ribosomal stalk, playing a central role in the interaction of the ribosome with GTP-bound translation factors. The protein is Large ribosomal subunit protein uL10 of Thermoplasma acidophilum (strain ATCC 25905 / DSM 1728 / JCM 9062 / NBRC 15155 / AMRC-C165).